Here is a 126-residue protein sequence, read N- to C-terminus: Aspartate 1-decarboxylase (126 aa).

S25 serves as the catalytic Schiff-base intermediate with substrate; via pyruvic acid. S25 carries the post-translational modification Pyruvic acid (Ser). T57 is a binding site for substrate. Y58 acts as the Proton donor in catalysis. 73–75 contacts substrate; sequence GGA.

This sequence belongs to the PanD family. Heterooctamer of four alpha and four beta subunits. The cofactor is pyruvate. Post-translationally, is synthesized initially as an inactive proenzyme, which is activated by self-cleavage at a specific serine bond to produce a beta-subunit with a hydroxyl group at its C-terminus and an alpha-subunit with a pyruvoyl group at its N-terminus.

The protein localises to the cytoplasm. It catalyses the reaction L-aspartate + H(+) = beta-alanine + CO2. The protein operates within cofactor biosynthesis; (R)-pantothenate biosynthesis; beta-alanine from L-aspartate: step 1/1. Catalyzes the pyruvoyl-dependent decarboxylation of aspartate to produce beta-alanine. The protein is Aspartate 1-decarboxylase of Acinetobacter baumannii (strain AB307-0294).